Here is a 210-residue protein sequence, read N- to C-terminus: 7-carboxy-7-deazaguanine synthase (210 aa).

Substrate is bound by residues 25 to 27 (IQG) and arginine 40. The region spanning 31–210 (HTGTAAYFIR…LQTHKYLNIP (180 aa)) is the Radical SAM core domain. The [4Fe-4S] cluster site is built by cysteine 44, cysteine 48, and cysteine 51. Threonine 84 is a substrate binding site. S-adenosyl-L-methionine is bound by residues glycine 86 and 127–129 (SPK). Proline 210 lines the substrate pocket.

It belongs to the radical SAM superfamily. 7-carboxy-7-deazaguanine synthase family. In terms of assembly, homodimer. It depends on [4Fe-4S] cluster as a cofactor. The cofactor is S-adenosyl-L-methionine. Mg(2+) is required as a cofactor.

It catalyses the reaction 6-carboxy-5,6,7,8-tetrahydropterin + H(+) = 7-carboxy-7-deazaguanine + NH4(+). The protein operates within purine metabolism; 7-cyano-7-deazaguanine biosynthesis. In terms of biological role, catalyzes the complex heterocyclic radical-mediated conversion of 6-carboxy-5,6,7,8-tetrahydropterin (CPH4) to 7-carboxy-7-deazaguanine (CDG), a step common to the biosynthetic pathways of all 7-deazapurine-containing compounds. This chain is 7-carboxy-7-deazaguanine synthase, found in Flavobacterium psychrophilum (strain ATCC 49511 / DSM 21280 / CIP 103535 / JIP02/86).